Reading from the N-terminus, the 358-residue chain is Peptide chain release factor 1 (358 aa).

Gln-235 carries the N5-methylglutamine modification.

It belongs to the prokaryotic/mitochondrial release factor family. Methylated by PrmC. Methylation increases the termination efficiency of RF1.

It is found in the cytoplasm. Peptide chain release factor 1 directs the termination of translation in response to the peptide chain termination codons UAG and UAA. In Brachyspira hyodysenteriae (strain ATCC 49526 / WA1), this protein is Peptide chain release factor 1.